A 663-amino-acid polypeptide reads, in one-letter code: MTSHIATETSVNRWSTEPVVREEGRPPGPEDFPSTKQGREQDGNVIGITPNYKIGEQKPNSELNLGKTGSLPRGSGDYKMTYRQEDYKQTIIDPKVITNANMPYISTRIPDPRRNLAGDFPSEHSKSKIKLDPLEQRRFRSSESRPITTSNYLAESVDRHREMEASRLREYLKAKENEANQPWNKPGWPGPKKNDESLRELETMKQRIETLKRDANKGPVNAELDELSKRAEELRKRDGWSKYKLVESDIYKTDPDPMPANIKDQVRDLLESRNSVETTTTQRDHDKSGYVTDVSTATWNFSTVDYSPRSVVSMNGASHDILKDDKPRSIMKRNDLVRREQMLYPTVDTQVVKSVVKKPTVTETVQRFEETRRTEEVERRVQRREKKERRSRHHSSSRHHSGWEGHTGGYQGHRSSSLSRGGHGGGGQETYYRQETTRRQQHNNYDDNFNRGIAHARYGSLSDSLRRGELQYVPNGEVRQSFYRDGSNGGQRMHKSYSTRDVFTGDGYDDRRSVSSFRRGSQQQVSPFVEFPPTLPRRGGGGDYRREEDAYFRPVSKSRSYADWDDAGRAGMGREVRRYDDDMSRLEAEFRDSLLMPMPAGNMNERDHRTEQLPGGYETFNKERHANSGRRSGRDGKPVDFNEATQEYNYKREQTLNDDRRRR.

The span at 1-15 (MTSHIATETSVNRWS) shows a compositional bias: polar residues. Disordered regions lie at residues 1–78 (MTSH…SGDY), 367–430 (RFEE…GQET), 517–546 (FRRG…DYRR), and 597–663 (PMPA…RRRR). Over residues 367–380 (RFEETRRTEEVERR) the composition is skewed to basic and acidic residues. Basic residues predominate over residues 381 to 400 (VQRREKKERRSRHHSSSRHH). Residues 517 to 526 (FRRGSQQQVS) are compositionally biased toward polar residues. 2 stretches are compositionally biased toward basic and acidic residues: residues 620–640 (FNKE…KPVD) and 649–663 (NYKR…RRRR).

In terms of assembly, interacts with vab-10 (via plankin domain). Isoform a: Expressed in the uterus, the vulva, the rectum, mechanosensory neurons and in head and tail neurons. Isoform e: Expressed in spermatheca and weakly in the vulva. Isoform f: Expressed in spermatheca and weakly in the vulva. Isoform i: Expressed in spermatheca and weakly in the vulva.

The protein resides in the apical cell membrane. The protein localises to the basal cell membrane. Its subcellular location is the cytoplasm. It localises to the cell junction. It is found in the hemidesmosome. The protein resides in the cell membrane. The protein localises to the cytoskeleton. In terms of biological role, required for embryonic morphology and development. Plays both a functional and a structural role in the maintenance and probably biogenesis of fibrous organelles, a hemidesomosome-like junction structure, which ensures muscle stability and muscle connection to the external cuticle. The chain is Protein pat-12 from Caenorhabditis elegans.